The following is a 183-amino-acid chain: ATP synthase subunit delta (183 aa).

This sequence belongs to the ATPase delta chain family. As to quaternary structure, F-type ATPases have 2 components, F(1) - the catalytic core - and F(0) - the membrane proton channel. F(1) has five subunits: alpha(3), beta(3), gamma(1), delta(1), epsilon(1). F(0) has three main subunits: a(1), b(2) and c(10-14). The alpha and beta chains form an alternating ring which encloses part of the gamma chain. F(1) is attached to F(0) by a central stalk formed by the gamma and epsilon chains, while a peripheral stalk is formed by the delta and b chains.

The protein localises to the cell inner membrane. Its function is as follows. F(1)F(0) ATP synthase produces ATP from ADP in the presence of a proton or sodium gradient. F-type ATPases consist of two structural domains, F(1) containing the extramembraneous catalytic core and F(0) containing the membrane proton channel, linked together by a central stalk and a peripheral stalk. During catalysis, ATP synthesis in the catalytic domain of F(1) is coupled via a rotary mechanism of the central stalk subunits to proton translocation. This protein is part of the stalk that links CF(0) to CF(1). It either transmits conformational changes from CF(0) to CF(1) or is implicated in proton conduction. The chain is ATP synthase subunit delta from Nitratidesulfovibrio vulgaris (strain DSM 19637 / Miyazaki F) (Desulfovibrio vulgaris).